Consider the following 426-residue polypeptide: Glutamate-1-semialdehyde 2,1-aminomutase (426 aa).

Lysine 263 bears the N6-(pyridoxal phosphate)lysine mark.

The protein belongs to the class-III pyridoxal-phosphate-dependent aminotransferase family. HemL subfamily. Homodimer. It depends on pyridoxal 5'-phosphate as a cofactor.

It localises to the cytoplasm. It catalyses the reaction (S)-4-amino-5-oxopentanoate = 5-aminolevulinate. The protein operates within porphyrin-containing compound metabolism; protoporphyrin-IX biosynthesis; 5-aminolevulinate from L-glutamyl-tRNA(Glu): step 2/2. The chain is Glutamate-1-semialdehyde 2,1-aminomutase from Dichelobacter nodosus (strain VCS1703A).